A 212-amino-acid chain; its full sequence is Ras-related protein Rab-15 (212 aa).

10 residues coordinate GTP: Ser17, Gly18, Val19, Gly20, Lys21, Thr22, Cys23, Ser35, Ser39, and Thr40. Mg(2+) is bound at residue Thr22. 2 consecutive short sequence motifs (switch) follow at residues 31–45 (NEFH…GVDF) and 63–80 (DTAG…YYRR). Residues Thr40 and Asp63 each contribute to the Mg(2+) site. GTP contacts are provided by Gly66, Asn121, Lys122, Asp124, Ser151, and Ala152. The disordered stretch occupies residues 193 to 212 (LEEEEGKPEGPANSSKTCWC). S-geranylgeranyl cysteine attachment occurs at residues Cys210 and Cys212. Cys212 carries the cysteine methyl ester modification.

It belongs to the small GTPase superfamily. Rab family. In terms of assembly, the GTP bound form of RAB15 interacts with REP15. Interacts (GTP-bound form) with MICAL1, MICAL3, MICALCL, EHBP1 and EHBP1L1. It depends on Mg(2+) as a cofactor.

It localises to the cell membrane. It carries out the reaction GTP + H2O = GDP + phosphate + H(+). With respect to regulation, regulated by guanine nucleotide exchange factors (GEFs) which promote the exchange of bound GDP for free GTP. Regulated by GTPase activating proteins (GAPs) which increase the GTP hydrolysis activity. Inhibited by GDP dissociation inhibitors (GDIs). Functionally, the small GTPases Rab are key regulators of intracellular membrane trafficking, from the formation of transport vesicles to their fusion with membranes. Rabs cycle between an inactive GDP-bound form and an active GTP-bound form that is able to recruit to membranes different sets of downstream effectors directly responsible for vesicle formation, movement, tethering and fusion. RAB15 may act in concert with RAB3A in regulating aspects of synaptic vesicle membrane flow within the nerve terminal. In Homo sapiens (Human), this protein is Ras-related protein Rab-15.